The chain runs to 275 residues: 2,3,4,5-tetrahydropyridine-2,6-dicarboxylate N-succinyltransferase (275 aa).

The substrate site is built by R106 and D143.

It belongs to the transferase hexapeptide repeat family. Homotrimer.

The protein localises to the cytoplasm. The enzyme catalyses (S)-2,3,4,5-tetrahydrodipicolinate + succinyl-CoA + H2O = (S)-2-succinylamino-6-oxoheptanedioate + CoA. It participates in amino-acid biosynthesis; L-lysine biosynthesis via DAP pathway; LL-2,6-diaminopimelate from (S)-tetrahydrodipicolinate (succinylase route): step 1/3. The sequence is that of 2,3,4,5-tetrahydropyridine-2,6-dicarboxylate N-succinyltransferase from Paraburkholderia xenovorans (strain LB400).